A 448-amino-acid chain; its full sequence is uncharacterized protein (448 aa).

An ATP-binding site is contributed by 257-264 (GRNAQGKT).

This is an uncharacterized protein from Methanocaldococcus jannaschii (strain ATCC 43067 / DSM 2661 / JAL-1 / JCM 10045 / NBRC 100440) (Methanococcus jannaschii).